The chain runs to 331 residues: Type 2 lactosamine alpha-2,3-sialyltransferase (331 aa).

Residues 1-4 (MRGY) lie on the Cytoplasmic side of the membrane. The helical; Signal-anchor for type II membrane protein transmembrane segment at 5 to 25 (LVAIFLSAVFLYYVLHCILWG) threads the bilayer. The Lumenal segment spans residues 26–331 (TNVYWAAPVE…KNLVINLTQD (306 aa)). Residues asparagine 129, asparagine 181, asparagine 282, asparagine 295, asparagine 308, and asparagine 327 are each glycosylated (N-linked (GlcNAc...) asparagine).

It belongs to the glycosyltransferase 29 family.

It localises to the golgi apparatus membrane. The enzyme catalyses a neolactoside nLc4Cer(d18:1(4E)) + CMP-N-acetyl-beta-neuraminate = a neolactoside IV(3)-alpha-NeuAc-nLc4Cer(d18:1(4E)) + CMP + H(+). It catalyses the reaction a beta-D-galactosyl-(1-&gt;4)-N-acetyl-beta-D-glucosaminyl derivative + CMP-N-acetyl-beta-neuraminate = an N-acetyl-alpha-neuraminyl-(2-&gt;3)-beta-D-galactosyl-(1-&gt;4)-N-acetyl-beta-D-glucosaminyl derivative + CMP + H(+). It carries out the reaction a neolactoside nLc6Cer(d18:1(4E)) + CMP-N-acetyl-beta-neuraminate = a neolactoside VI(3)-alpha-NeuNAc-nLc6Cer(d18:1(4E)) + CMP + H(+). Its function is as follows. Transfers the sialyl residue from CMP-N-acetyl-beta-neuraminate to the terminal galactose residue on sugar chains of glycoproteins and glycolipids. It's alpha-2,3-sialyltransferase activity is specific toward type II glycan chains (Galbeta1-4GlcNAc) on glycoproteins and glycolipids such as neolactosides nLc4Cer and nLc6Cer, whose sialyl-products serve as precursors for the Lewis X antigen. Critically involved in the synthesis of functional selectin ligands needed for neutrophil recruitment during inflammation and lymphocyte homing to the lymph nodes. The protein is Type 2 lactosamine alpha-2,3-sialyltransferase (ST3GAL6) of Pongo abelii (Sumatran orangutan).